We begin with the raw amino-acid sequence, 305 residues long: Mas-related G-protein coupled receptor member A8 (305 aa).

Residues 1-17 lie on the Extracellular side of the membrane; the sequence is MDKTILGSIDIETLIRH. A helical membrane pass occupies residues 18-38; sequence LMIIIFGLVGLTGNAIVFWLL. The Cytoplasmic portion of the chain corresponds to 39–46; the sequence is GFHLHRNA. The helical transmembrane segment at 47–67 threads the bilayer; the sequence is FLVYILNLALADFFYLLCHII. Topologically, residues 68–85 are extracellular; that stretch reads NSIMFLLKVPSPNIILDH. Residues 86–106 traverse the membrane as a helical segment; the sequence is CFYTIMIVLYITGLSMLSAIS. Residues 107–129 lie on the Cytoplasmic side of the membrane; the sequence is TERCLSVLCPIWYRCHRPEHTST. Residues 130 to 150 traverse the membrane as a helical segment; it reads AMCAVIWVMSLLISILNGYFC. N-linked (GlcNAc...) asparagine glycans are attached at residues asparagine 151 and asparagine 159. Residues 151 to 172 lie on the Extracellular side of the membrane; that stretch reads NFSSPKYVNNSVCQASDIFIRT. Residues 173–193 form a helical membrane-spanning segment; it reads YPIFLFVLLCLSTLALLARLF. The Cytoplasmic portion of the chain corresponds to 194–207; that stretch reads SGAGKRKFTRLFVT. Residues 208-228 traverse the membrane as a helical segment; sequence IMLAILVFLLCGLPLGFFWFL. Over 229–243 the chain is Extracellular; sequence SPWIEDRFIVLDYRL. Residues 244–264 form a helical membrane-spanning segment; it reads FFASVVLTVVNSCANPIIYFF. Residues 265–305 are Cytoplasmic-facing; sequence VGSFRHRLKQQTLKMFLQRALQDTPETPENMVEMSRSKAEP.

This sequence belongs to the G-protein coupled receptor 1 family. Mas subfamily. As to expression, expressed in a subset of sensory neurons that includes nociceptors. Expressed in the subclass of non-peptidergic sensory neurons that are IB4(+) and VR1(-).

The protein localises to the cell membrane. Functionally, orphan receptor. May be a receptor for RFamide-family neuropeptides such as NPFF and NPAF, which are analgesic in vivo. May regulate nociceptor function and/or development, including the sensation or modulation of pain. This is Mas-related G-protein coupled receptor member A8 (Mrgpra8) from Mus musculus (Mouse).